The chain runs to 1241 residues: Dinoflagellate luciferase (1241 aa).

Luciferase regions lie at residues 114–465 (KTGL…IKRD), 491–842 (DQGF…TKRD), and 868–1218 (EKGF…KKRD).

It belongs to the calycin superfamily. Luciferase family.

The protein resides in the cytoplasmic vesicle. It catalyses the reaction dinoflagellate luciferin + O2 = oxidized dinoflagellate luciferin + hnu + H2O + H(+). Its activity is regulated as follows. Regulated by pH: upon acidification, at a pH of 6.3, dinoflagellate luciferin is released from luciferin-binding protein LBP, allowing the interaction between Dinoflagellate luciferase and its substrate luciferin. Its function is as follows. Emits blue light flashes with a wavelength of 475 nm during the night phase. The sequence is that of Dinoflagellate luciferase from Lingulodinium polyedra (Dinoflagellate).